The sequence spans 242 residues: Uridylate kinase (242 aa).

Lysine 11 to glycine 14 is an ATP binding site. An involved in allosteric activation by GTP region spans residues glycine 19–glycine 24. Glycine 53 is a UMP binding site. ATP is bound by residues glycine 54 and arginine 58. UMP-binding positions include aspartate 73 and isoleucine 134–threonine 141. Positions 162, 168, and 171 each coordinate ATP.

This sequence belongs to the UMP kinase family. As to quaternary structure, homohexamer.

Its subcellular location is the cytoplasm. The catalysed reaction is UMP + ATP = UDP + ADP. It functions in the pathway pyrimidine metabolism; CTP biosynthesis via de novo pathway; UDP from UMP (UMPK route): step 1/1. Its activity is regulated as follows. Allosterically activated by GTP. Inhibited by UTP. Catalyzes the reversible phosphorylation of UMP to UDP. The polypeptide is Uridylate kinase (Streptococcus agalactiae serotype Ia (strain ATCC 27591 / A909 / CDC SS700)).